The primary structure comprises 446 residues: tRNA-2-methylthio-N(6)-dimethylallyladenosine synthase (446 aa).

One can recognise an MTTase N-terminal domain in the interval 3–124 (KKLYIKTYGC…LPELISKVVR (122 aa)). Residues cysteine 12, cysteine 48, cysteine 87, cysteine 162, cysteine 166, and cysteine 169 each coordinate [4Fe-4S] cluster. In terms of domain architecture, Radical SAM core spans 148–380 (YPQGASSFIS…QKELAAQQLA (233 aa)). The 64-residue stretch at 383–446 (ESCIGSTMKV…LNSLSGEIYR (64 aa)) folds into the TRAM domain.

Belongs to the methylthiotransferase family. MiaB subfamily. In terms of assembly, monomer. It depends on [4Fe-4S] cluster as a cofactor.

The protein resides in the cytoplasm. The catalysed reaction is N(6)-dimethylallyladenosine(37) in tRNA + (sulfur carrier)-SH + AH2 + 2 S-adenosyl-L-methionine = 2-methylsulfanyl-N(6)-dimethylallyladenosine(37) in tRNA + (sulfur carrier)-H + 5'-deoxyadenosine + L-methionine + A + S-adenosyl-L-homocysteine + 2 H(+). Its function is as follows. Catalyzes the methylthiolation of N6-(dimethylallyl)adenosine (i(6)A), leading to the formation of 2-methylthio-N6-(dimethylallyl)adenosine (ms(2)i(6)A) at position 37 in tRNAs that read codons beginning with uridine. The polypeptide is tRNA-2-methylthio-N(6)-dimethylallyladenosine synthase (Rickettsia bellii (strain OSU 85-389)).